A 325-amino-acid polypeptide reads, in one-letter code: Phosphate acyltransferase (325 aa).

This sequence belongs to the PlsX family. Homodimer. Probably interacts with PlsY.

The protein resides in the cytoplasm. It carries out the reaction a fatty acyl-[ACP] + phosphate = an acyl phosphate + holo-[ACP]. Its pathway is lipid metabolism; phospholipid metabolism. Catalyzes the reversible formation of acyl-phosphate (acyl-PO(4)) from acyl-[acyl-carrier-protein] (acyl-ACP). This enzyme utilizes acyl-ACP as fatty acyl donor, but not acyl-CoA. This chain is Phosphate acyltransferase, found in Mycoplasmopsis pulmonis (strain UAB CTIP) (Mycoplasma pulmonis).